A 651-amino-acid polypeptide reads, in one-letter code: Cylicin-1 (651 aa).

2 disordered regions span residues 110 to 241 (LKKA…CSEN) and 267 to 615 (NYSQ…CEPS). Composition is skewed to basic and acidic residues over residues 111–129 (KKAEYKKSKDEKGGTPLKK) and 146–173 (QIVEEKTKRQNEADKTPLKSSHENEQSK). Residues 186–195 (QNSKTVSKNC) show a composition bias toward polar residues. The segment covering 196–205 (SQKDKKDSKN) has biased composition (basic and acidic residues). The span at 230–241 (SNDPISEICSEN) shows a compositional bias: polar residues. Over residues 271–281 (NNSKNYSLKYT) the composition is skewed to low complexity. A run of 8 repeats spans residues 278–305 (LKYTKYTKKDTKKNAKKSSDAESEDSKD), 306–342 (AKKDSKKVKKNVKKDDKKKDVKKDTESTDAESGDSKD), 343–379 (ERKDTKKDKKKLKKDDKKKDTKKYPESTDTESGDAKD), 380–417 (ARNDSRNLKKASKNDDKKKDAKKITFSTDSESELESKE), 418–453 (SQKDEKKDKKDSKTDNKKSVKNDEESTDADSEPKGD), 454–491 (SKKGKKDEKKGKKDSKKDDKKKDAKKNAESTEMESDLE), 492–531 (LKKDKKHSKEKKGSKKDIKKDARKDTESTDAEFDESSKTG), and 532–553 (FKTSTKIKGSDTESEESLYKPG). Basic and acidic residues-rich tracts occupy residues 284-308 (TKKDTKKNAKKSSDAESEDSKDAKK), 318-331 (KKDDKKKDVKKDTE), 338-368 (GDSKDERKDTKKDKKKLKKDDKKKDTKKYPE), 375-402 (GDAKDARNDSRNLKKASKNDDKKKDAKK), 413-441 (LESKESQKDEKKDKKDSKTDNKKSVKNDE), and 448-482 (SEPKGDSKKGKKDEKKGKKDSKKDDKKKDAKKNAE). Basic residues predominate over residues 495-505 (DKKHSKEKKGS). A compositionally biased stretch (basic and acidic residues) spans 506-518 (KKDIKKDARKDTE). A compositionally biased stretch (polar residues) spans 529–538 (KTGFKTSTKI). The segment at 532–553 (FKTSTKIKGSDTESEESLYKPG) is 8 X approximate tandem repeats. The segment covering 587 to 607 (TFNEKGEKASTGRVPPSREKP) has biased composition (basic and acidic residues).

Interacts with proteins of spermatozoa head including ACTL7A, CCIN, FAM209A and SPACA1; the interactions may be necessary for proper acrosome attachment to the nuclear envelope. In terms of tissue distribution, testis.

The protein localises to the cytoplasm. Its subcellular location is the cytoskeleton. It is found in the perinuclear theca. It localises to the calyx. Plays a role in the establishment of normal sperm morphology during spermatogenesis and is required for acrosome attachment to the nuclear envelope. The polypeptide is Cylicin-1 (CYLC1) (Homo sapiens (Human)).